The sequence spans 116 residues: uncharacterized protein (116 aa).

Disordered stretches follow at residues 1 to 26 (MLLT…KSSN) and 74 to 116 (ENDL…KSSI). Over residues 14 to 26 (SANSTDDSSKSSN) the composition is skewed to low complexity. The span at 74–86 (ENDLKRSKSQGRE) shows a compositional bias: basic and acidic residues. Over residues 104–116 (NTASEIQRTKSSI) the composition is skewed to polar residues.

This is an uncharacterized protein from Saccharomyces cerevisiae (strain ATCC 204508 / S288c) (Baker's yeast).